We begin with the raw amino-acid sequence, 157 residues long: 2-C-methyl-D-erythritol 2,4-cyclodiphosphate synthase (157 aa).

A divalent metal cation is bound by residues aspartate 8 and histidine 10. 4-CDP-2-C-methyl-D-erythritol 2-phosphate is bound by residues 8–10 (DVH) and 34–35 (HS). Histidine 42 contacts a divalent metal cation. 4-CDP-2-C-methyl-D-erythritol 2-phosphate contacts are provided by residues 56–58 (DIG), 61–65 (FPDTD), 100–106 (AQAPKMA), 132–135 (TTSE), phenylalanine 139, and arginine 142.

Belongs to the IspF family. In terms of assembly, homotrimer. A divalent metal cation serves as cofactor.

The catalysed reaction is 4-CDP-2-C-methyl-D-erythritol 2-phosphate = 2-C-methyl-D-erythritol 2,4-cyclic diphosphate + CMP. It participates in isoprenoid biosynthesis; isopentenyl diphosphate biosynthesis via DXP pathway; isopentenyl diphosphate from 1-deoxy-D-xylulose 5-phosphate: step 4/6. Its function is as follows. Involved in the biosynthesis of isopentenyl diphosphate (IPP) and dimethylallyl diphosphate (DMAPP), two major building blocks of isoprenoid compounds. Catalyzes the conversion of 4-diphosphocytidyl-2-C-methyl-D-erythritol 2-phosphate (CDP-ME2P) to 2-C-methyl-D-erythritol 2,4-cyclodiphosphate (ME-CPP) with a corresponding release of cytidine 5-monophosphate (CMP). The sequence is that of 2-C-methyl-D-erythritol 2,4-cyclodiphosphate synthase from Photobacterium profundum (strain SS9).